The primary structure comprises 392 residues: Mitochondrial distribution and morphology protein 10 (392 aa).

It belongs to the MDM10 family. As to quaternary structure, component of the ER-mitochondria encounter structure (ERMES) or MDM complex, composed of MMM1, MDM10, MDM12 and MDM34. Associates with the mitochondrial outer membrane sorting assembly machinery SAM(core) complex.

It is found in the mitochondrion outer membrane. Its function is as follows. Component of the ERMES/MDM complex, which serves as a molecular tether to connect the endoplasmic reticulum and mitochondria. Components of this complex are involved in the control of mitochondrial shape and protein biogenesis and may function in phospholipid exchange. MDM10 is involved in the late assembly steps of the general translocase of the mitochondrial outer membrane (TOM complex). Functions in the TOM40-specific route of the assembly of outer membrane beta-barrel proteins, including the association of TOM40 with the receptor TOM22 and small TOM proteins. Can associate with the SAM(core) complex as well as the MDM12-MMM1 complex, both involved in late steps of the major beta-barrel assembly pathway, that is responsible for biogenesis of all outer membrane beta-barrel proteins. May act as a switch that shuttles between both complexes and channels precursor proteins into the TOM40-specific pathway. Plays a role in mitochondrial morphology and in the inheritance of mitochondria. This Phaeosphaeria nodorum (strain SN15 / ATCC MYA-4574 / FGSC 10173) (Glume blotch fungus) protein is Mitochondrial distribution and morphology protein 10.